The chain runs to 389 residues: NADH-quinone oxidoreductase subunit D (389 aa).

It belongs to the complex I 49 kDa subunit family. NDH-1 is composed of 14 different subunits. Subunits NuoB, C, D, E, F, and G constitute the peripheral sector of the complex.

The protein resides in the cell inner membrane. The enzyme catalyses a quinone + NADH + 5 H(+)(in) = a quinol + NAD(+) + 4 H(+)(out). Functionally, NDH-1 shuttles electrons from NADH, via FMN and iron-sulfur (Fe-S) centers, to quinones in the respiratory chain. The immediate electron acceptor for the enzyme in this species is believed to be ubiquinone. Couples the redox reaction to proton translocation (for every two electrons transferred, four hydrogen ions are translocated across the cytoplasmic membrane), and thus conserves the redox energy in a proton gradient. This Citrifermentans bemidjiense (strain ATCC BAA-1014 / DSM 16622 / JCM 12645 / Bem) (Geobacter bemidjiensis) protein is NADH-quinone oxidoreductase subunit D.